The primary structure comprises 66 residues: UPF0370 protein YpfN (66 aa).

The helical transmembrane segment at 4 to 24 threads the bilayer; sequence LAKYWWILVLVFLVGVLLNVI. Positions 39-66 are disordered; the sequence is KPELPPHRDFNDKWDDEDDWPKKDQSKK. Residues 42–51 are compositionally biased toward basic and acidic residues; it reads LPPHRDFNDK.

Belongs to the UPF0370 family.

It localises to the cell membrane. The polypeptide is UPF0370 protein YpfN (Salmonella arizonae (strain ATCC BAA-731 / CDC346-86 / RSK2980)).